Reading from the N-terminus, the 548-residue chain is MDRFGDISEGEVDHSFFDSDFEDTKKCESNSIFDKQNDDDFKEGINKDIKNLNLKFGVQNDNLKEKIDNDTENVNVKLGIQTKENYLTQKGNERKPKFPSKEQHVENDPIQTRSPSLLTSSRSKKLCDTTKGNKLHLPVPNRIPKIVKGEDDYYTDGEESSDDGKKYHVRSKSAKPSSNLKKNNTSKKYSKASSSSLSSSSSRSSSDCSDIGSDMQNKPDSGSSGKRVSSVTPSSPKQKCKSGRKSSAKQKAGDYNAESEDNVTDVTPASTPDSSPAQPFELSQSQNQKVKVKRQENVSRDVYEDVEALKNDSRCLKSAKRKEKHGQNFAPKSSVLDANLDRRSKQKVLHDTMDLNHLLKAFLQLDKKGPQKHHFEQPSIIPRKNYSFTREEVRQIDRENQRLLKELSRQAEKPGNKSTIPGRSLGHPPKLYHSALNRQREQQRIERENMALLKRLEAVKPTVGMKRSEQLMDYHRNISYLNPSPSVRRVRSTLGHYSPLRGASRTSSATSGLSCKTDRSVLDTSSGFLLRPKPPNIQCSNSKVLRSH.

2 positions are modified to phosphoserine: serine 8 and serine 19. 3 disordered regions span residues 85-297 (NYLT…RQEN), 407-431 (LSRQAEKPGNKSTIPGRSLGHPPKL), and 497-548 (YSPL…LRSH). Over residues 91-107 (GNERKPKFPSKEQHVEN) the composition is skewed to basic and acidic residues. Over residues 112–121 (TRSPSLLTSS) the composition is skewed to low complexity. A compositionally biased stretch (acidic residues) spans 152-161 (DYYTDGEESS). Threonine 155 is subject to Phosphothreonine. Phosphoserine is present on residues serine 160 and serine 161. The span at 191 to 209 (KASSSSLSSSSSRSSSDCS) shows a compositional bias: low complexity. The span at 214–237 (DMQNKPDSGSSGKRVSSVTPSSPK) shows a compositional bias: polar residues. Residue serine 235 is modified to Phosphoserine. Positions 238–248 (QKCKSGRKSSA) are enriched in basic residues. Residue serine 259 is modified to Phosphoserine. Residues 264–289 (TDVTPASTPDSSPAQPFELSQSQNQK) show a composition bias toward polar residues. The stretch at 383 to 460 (RKNYSFTREE…ALLKRLEAVK (78 aa)) forms a coiled coil. 2 stretches are compositionally biased toward polar residues: residues 504-514 (SRTSSATSGLS) and 537-548 (IQCSNSKVLRSH).

This sequence belongs to the CFAP97 family.

The polypeptide is Cilia- and flagella-associated protein 97 (Rattus norvegicus (Rat)).